A 256-amino-acid chain; its full sequence is Type III pantothenate kinase (256 aa).

Residue 6–13 coordinates ATP; the sequence is DVGNTNTV. Substrate contacts are provided by residues tyrosine 100 and 107 to 110; that span reads GADR. Aspartate 109 functions as the Proton acceptor in the catalytic mechanism. Aspartate 129 provides a ligand contact to K(+). Threonine 132 contributes to the ATP binding site. Threonine 184 contacts substrate.

Belongs to the type III pantothenate kinase family. As to quaternary structure, homodimer. It depends on NH4(+) as a cofactor. K(+) serves as cofactor.

Its subcellular location is the cytoplasm. It carries out the reaction (R)-pantothenate + ATP = (R)-4'-phosphopantothenate + ADP + H(+). The protein operates within cofactor biosynthesis; coenzyme A biosynthesis; CoA from (R)-pantothenate: step 1/5. In terms of biological role, catalyzes the phosphorylation of pantothenate (Pan), the first step in CoA biosynthesis. In Myxococcus xanthus (strain DK1622), this protein is Type III pantothenate kinase.